Reading from the N-terminus, the 195-residue chain is Peptidyl-tRNA hydrolase (195 aa).

Tyr18 lines the tRNA pocket. His23 acts as the Proton acceptor in catalysis. Phe69, Asn71, and Asn117 together coordinate tRNA.

Belongs to the PTH family. Monomer.

It is found in the cytoplasm. It carries out the reaction an N-acyl-L-alpha-aminoacyl-tRNA + H2O = an N-acyl-L-amino acid + a tRNA + H(+). Functionally, hydrolyzes ribosome-free peptidyl-tRNAs (with 1 or more amino acids incorporated), which drop off the ribosome during protein synthesis, or as a result of ribosome stalling. Catalyzes the release of premature peptidyl moieties from peptidyl-tRNA molecules trapped in stalled 50S ribosomal subunits, and thus maintains levels of free tRNAs and 50S ribosomes. The sequence is that of Peptidyl-tRNA hydrolase from Hahella chejuensis (strain KCTC 2396).